Here is a 559-residue protein sequence, read N- to C-terminus: Glycerol kinase (559 aa).

Residue threonine 20 coordinates ADP. Residues threonine 20, serine 21, and serine 22 each contribute to the ATP site. Sn-glycerol 3-phosphate is bound at residue threonine 20. Arginine 24 is a binding site for ADP. Residues arginine 94, glutamate 95, and tyrosine 148 each contribute to the sn-glycerol 3-phosphate site. Residues arginine 94, glutamate 95, and tyrosine 148 each contribute to the glycerol site. Beta-D-fructose 1,6-bisphosphate is bound at residue glycine 252. Position 265 (aspartate 265) interacts with sn-glycerol 3-phosphate. Glycerol is bound by residues aspartate 265 and glutamine 266. ADP contacts are provided by threonine 287, glycine 332, glycine 433, and asparagine 437. Threonine 287, glycine 332, and glycine 433 together coordinate ATP. The helical transmembrane segment at 532–552 (IFCSLPLGFFIVSSMVMLIGA) threads the bilayer.

Belongs to the FGGY kinase family. Widely expressed in fetal and adult tissues. As to expression, the sole isoform expressed in adult liver and kidney.

The protein resides in the mitochondrion outer membrane. Its subcellular location is the nucleus. The protein localises to the cytoplasm. It is found in the cytosol. The enzyme catalyses glycerol + ATP = sn-glycerol 3-phosphate + ADP + H(+). It functions in the pathway polyol metabolism; glycerol degradation via glycerol kinase pathway; sn-glycerol 3-phosphate from glycerol: step 1/1. With respect to regulation, potassium and magnesium-dependent. Its function is as follows. Kinase that plays a key role in glycerol metabolism, catalyzing its phosphorylation to produce sn-glycerol 3-phosphate. Sn-glycerol 3-phosphate is a crucial intermediate in various metabolic pathways, such as the synthesis of glycerolipids and triglycerides, glycogenesis, glycolysis and gluconeogenesis. In Homo sapiens (Human), this protein is Glycerol kinase.